Consider the following 187-residue polypeptide: Large ribosomal subunit protein uL5 (187 aa).

The protein belongs to the universal ribosomal protein uL5 family. Part of the 50S ribosomal subunit; part of the 5S rRNA/L5/L18/L25 subcomplex. Contacts the 5S rRNA and the P site tRNA. Forms a bridge to the 30S subunit in the 70S ribosome.

This is one of the proteins that bind and probably mediate the attachment of the 5S RNA into the large ribosomal subunit, where it forms part of the central protuberance. In the 70S ribosome it contacts protein S13 of the 30S subunit (bridge B1b), connecting the 2 subunits; this bridge is implicated in subunit movement. Contacts the P site tRNA; the 5S rRNA and some of its associated proteins might help stabilize positioning of ribosome-bound tRNAs. This is Large ribosomal subunit protein uL5 from Roseobacter denitrificans (strain ATCC 33942 / OCh 114) (Erythrobacter sp. (strain OCh 114)).